Here is a 339-residue protein sequence, read N- to C-terminus: Biotin synthase (339 aa).

The region spanning 55-282 is the Radical SAM core domain; sequence NAVQLSTLLS…KAVVRLSAGR (228 aa). [4Fe-4S] cluster is bound by residues Cys-70, Cys-74, and Cys-77. Residues Cys-114, Cys-145, Cys-205, and Arg-277 each contribute to the [2Fe-2S] cluster site.

This sequence belongs to the radical SAM superfamily. Biotin synthase family. As to quaternary structure, homodimer. [4Fe-4S] cluster serves as cofactor. Requires [2Fe-2S] cluster as cofactor.

The enzyme catalyses (4R,5S)-dethiobiotin + (sulfur carrier)-SH + 2 reduced [2Fe-2S]-[ferredoxin] + 2 S-adenosyl-L-methionine = (sulfur carrier)-H + biotin + 2 5'-deoxyadenosine + 2 L-methionine + 2 oxidized [2Fe-2S]-[ferredoxin]. The protein operates within cofactor biosynthesis; biotin biosynthesis; biotin from 7,8-diaminononanoate: step 2/2. Functionally, catalyzes the conversion of dethiobiotin (DTB) to biotin by the insertion of a sulfur atom into dethiobiotin via a radical-based mechanism. This is Biotin synthase from Burkholderia orbicola (strain MC0-3).